We begin with the raw amino-acid sequence, 261 residues long: Imidazole glycerol phosphate synthase subunit HisF (261 aa).

Catalysis depends on residues Asp16 and Asp135.

This sequence belongs to the HisA/HisF family. In terms of assembly, heterodimer of HisH and HisF.

Its subcellular location is the cytoplasm. The enzyme catalyses 5-[(5-phospho-1-deoxy-D-ribulos-1-ylimino)methylamino]-1-(5-phospho-beta-D-ribosyl)imidazole-4-carboxamide + L-glutamine = D-erythro-1-(imidazol-4-yl)glycerol 3-phosphate + 5-amino-1-(5-phospho-beta-D-ribosyl)imidazole-4-carboxamide + L-glutamate + H(+). It participates in amino-acid biosynthesis; L-histidine biosynthesis; L-histidine from 5-phospho-alpha-D-ribose 1-diphosphate: step 5/9. IGPS catalyzes the conversion of PRFAR and glutamine to IGP, AICAR and glutamate. The HisF subunit catalyzes the cyclization activity that produces IGP and AICAR from PRFAR using the ammonia provided by the HisH subunit. The polypeptide is Imidazole glycerol phosphate synthase subunit HisF (Mycolicibacterium vanbaalenii (strain DSM 7251 / JCM 13017 / BCRC 16820 / KCTC 9966 / NRRL B-24157 / PYR-1) (Mycobacterium vanbaalenii)).